Here is a 501-residue protein sequence, read N- to C-terminus: Lysine--tRNA ligase (501 aa).

2 residues coordinate Mg(2+): E404 and E411.

The protein belongs to the class-II aminoacyl-tRNA synthetase family. In terms of assembly, homodimer. It depends on Mg(2+) as a cofactor.

It is found in the cytoplasm. It catalyses the reaction tRNA(Lys) + L-lysine + ATP = L-lysyl-tRNA(Lys) + AMP + diphosphate. This Campylobacter jejuni (strain RM1221) protein is Lysine--tRNA ligase.